Here is a 327-residue protein sequence, read N- to C-terminus: CREB homolog crh-1 (327 aa).

Residues 16–75 (SPLMMLLFKALQEGGDSEDEARRRREQLNRRPSYRMILKDLETADKVMKKEPEETPPSSV) form the KID domain. 2 disordered regions span residues 27 to 114 (QEGG…SPYG) and 151 to 200 (KVFP…VQSL). Residues 35-44 (EARRRREQLN) are compositionally biased toward basic and acidic residues. Residue Ser48 is modified to Phosphoserine. Positions 52-68 (ILKDLETADKVMKKEPE) are enriched in basic and acidic residues. Positions 71 to 84 (PPSSVDASPLQFQS) are enriched in polar residues. Over residues 161-172 (GLGGGGGGGGVP) the composition is skewed to gly residues. Over residues 173–199 (GPSSGIAGMSVQPPTSSTPSQQQSVQS) the composition is skewed to low complexity. The bZIP domain maps to 266 to 317 (NRKRQVRLLKNREAAKECRRKKKEYVKCLENRVSVLENQNKALIEELKTLKE). Residues 267-292 (RKRQVRLLKNREAAKECRRKKKEYVK) are basic motif. Residues 284 to 318 (RRKKKEYVKCLENRVSVLENQNKALIEELKTLKEL) adopt a coiled-coil conformation. A leucine-zipper region spans residues 294-315 (LENRVSVLENQNKALIEELKTL).

It belongs to the bZIP family. As to quaternary structure, interacts with CREB-regulated transcription coactivator homolog crtc-1. Transcriptional activity is enhanced by phosphorylation. Phosphorylated by cmk-1. In terms of tissue distribution, expressed widely, including in head neurons AFD, gustatory neurons ASE, the olfactory neurons AWC, and in the ASI sensory neurons, as well as in the intestine and gonads in hermaphrodites.

It is found in the nucleus. Transcription factor. Transcriptional activity probably positively regulated by phosphorylation. Modulates expression of target genes, acting by binding to regulatory cAMP response elements (CRE). Acts downstream of the calcium-triggered CaMKK-CaMK1 signaling cascade, consisting of the protein kinase kinase ckk-1 and the protein kinase cmk-1. Plays a role in learning and memory, feeding behavior, stress response, entry into the dauer stage and modulation of lifespan. Involved in commitment to the developmentally arrested larval state known as dauer, acting by positively regulating the expression of dauer-inhibiting TGF-beta-like daf-7 in the ASI neurons. Plays a role in both associative and non-associative long-term memory (LTM). Involved in modulating feeding behavior, acting by regulating transcription of tryptophan hydroxylase tph-1 in serotonergic ADF neurons. Regulates transcription of genes involved in endoplasmic reticulum (ER) stress. Involved in modulation of lifespan, in response to raised temperature, but independently of the heat-shock response pathway, acting by regulating transcription of FMRFamide-like neuropeptides flp-6 in the AFD neuron. Its function is as follows. Plays a role in associative long-term memory (LTM) and learning. In terms of biological role, plays a role in associative long-term memory (LTM) and learning; perhaps required at the time of acquisition and/or the consolidation phase of memory formation. In Caenorhabditis elegans, this protein is CREB homolog crh-1.